The following is a 131-amino-acid chain: Small ribosomal subunit protein uS8 (131 aa).

The protein belongs to the universal ribosomal protein uS8 family. In terms of assembly, part of the 30S ribosomal subunit. Contacts proteins S5 and S12.

One of the primary rRNA binding proteins, it binds directly to 16S rRNA central domain where it helps coordinate assembly of the platform of the 30S subunit. The protein is Small ribosomal subunit protein uS8 of Erythrobacter litoralis (strain HTCC2594).